A 219-amino-acid chain; its full sequence is Histone H1.4 (219 aa).

Low complexity predominate over residues 1 to 15 (MSETAPAAPAAPAPA). The interval 1 to 41 (MSETAPAAPAAPAPAEKTPVKKKARKSAGAAKRKASGPPVS) is disordered. Ser2 is modified (N-acetylserine). Position 2 is a phosphoserine (Ser2). Lys17 carries the post-translational modification N6-acetyllysine. Thr18 carries the post-translational modification Phosphothreonine. Over residues 20-35 (VKKKARKSAGAAKRKA) the composition is skewed to basic residues. Lys26 is modified (N6-acetyllysine; alternate). An N6-methyllysine; alternate modification is found at Lys26. Lys34 is subject to N6-(beta-hydroxybutyryl)lysine; alternate. Position 34 is an N6-succinyllysine; alternate (Lys34). Ser36 bears the Phosphoserine mark. In terms of domain architecture, H15 spans 36-109 (SGPPVSELIT…GASGSFKLNK (74 aa)). At Lys52 the chain carries N6-(beta-hydroxybutyryl)lysine. Arg54 is subject to Citrulline. 4 positions are modified to N6-(beta-hydroxybutyryl)lysine: Lys64, Lys85, Lys90, and Lys106. The interval 92–219 (TLVQTKGTGA…KPKKAAAKKK (128 aa)) is disordered. The segment covering 119 to 140 (KAKKAGAAKAKKPAGAAKKPKK) has biased composition (basic residues). A Phosphothreonine modification is found at Thr146. Basic residues-rich tracts occupy residues 149 to 160 (KSAKKTPKKAKK) and 168 to 185 (KKAK…KKAP). ADP-ribosylserine is present on Ser150. Ser187 is subject to Phosphoserine. Basic residues predominate over residues 192–219 (KAVKPKAAKPKTAKPKAAKPKKAAAKKK).

The protein belongs to the histone H1/H5 family. In terms of processing, H1 histones are progressively phosphorylated during the cell cycle, becoming maximally phosphorylated during late G2 phase and M phase, and being dephosphorylated sharply thereafter. Acetylated at Lys-26. Deacetylated at Lys-26 by SIRT1. Post-translationally, citrullination at Arg-54 (H1R54ci) by PADI4 takes place within the DNA-binding site of H1 and results in its displacement from chromatin and global chromatin decondensation, thereby promoting pluripotency and stem cell maintenance. In terms of processing, ADP-ribosylated on Ser-150 in response to DNA damage.

The protein localises to the nucleus. Its subcellular location is the chromosome. Histone H1 protein binds to linker DNA between nucleosomes forming the macromolecular structure known as the chromatin fiber. Histones H1 are necessary for the condensation of nucleosome chains into higher-order structured fibers. Also acts as a regulator of individual gene transcription through chromatin remodeling, nucleosome spacing and DNA methylation. This is Histone H1.4 from Homo sapiens (Human).